The chain runs to 145 residues: uncharacterized protein (145 aa).

This sequence belongs to the SAP18 family.

Its subcellular location is the cytoplasm. The protein localises to the nucleus. This is an uncharacterized protein from Schizosaccharomyces pombe (strain 972 / ATCC 24843) (Fission yeast).